A 248-amino-acid polypeptide reads, in one-letter code: ATP synthase subunit a, chloroplastic (248 aa).

5 helical membrane passes run 38-58 (QVLL…VLTV), 96-116 (VPFI…GALV), 135-155 (INTT…AGLA), 200-220 (LVVA…VMLL), and 221-241 (GLFT…AYIG).

This sequence belongs to the ATPase A chain family. As to quaternary structure, F-type ATPases have 2 components, CF(1) - the catalytic core - and CF(0) - the membrane proton channel. CF(1) has five subunits: alpha(3), beta(3), gamma(1), delta(1), epsilon(1). CF(0) has four main subunits: a, b, b' and c.

Its subcellular location is the plastid. It localises to the chloroplast thylakoid membrane. Functionally, key component of the proton channel; it plays a direct role in the translocation of protons across the membrane. This is ATP synthase subunit a, chloroplastic from Welwitschia mirabilis (Tree tumbo).